Reading from the N-terminus, the 917-residue chain is Translation initiation factor IF-2 (917 aa).

Over residues 102–249 (EKSQAEEQAL…KWTAEPKAPE (148 aa)) the composition is skewed to basic and acidic residues. Residues 102–326 (EKSQAEEQAL…KSSTLQQGFH (225 aa)) form a disordered region. Over residues 279 to 293 (RRGRTAKAPRAKKNN) the composition is skewed to basic residues. The segment covering 294–306 (RHSEKADREEARA) has biased composition (basic and acidic residues). Residues 416–585 (SRAPVVTIMG…LLQAEVLELK (170 aa)) form the tr-type G domain. The G1 stretch occupies residues 425–432 (GHVDHGKT). 425–432 (GHVDHGKT) contacts GTP. The segment at 450–454 (GITQH) is G2. The segment at 471–474 (DTPG) is G3. Residues 471–475 (DTPGH) and 525–528 (NKID) each bind GTP. The segment at 525–528 (NKID) is G4. The interval 561 to 563 (SAK) is G5.

The protein belongs to the TRAFAC class translation factor GTPase superfamily. Classic translation factor GTPase family. IF-2 subfamily.

Its subcellular location is the cytoplasm. One of the essential components for the initiation of protein synthesis. Protects formylmethionyl-tRNA from spontaneous hydrolysis and promotes its binding to the 30S ribosomal subunits. Also involved in the hydrolysis of GTP during the formation of the 70S ribosomal complex. This chain is Translation initiation factor IF-2 (infB), found in Proteus vulgaris.